We begin with the raw amino-acid sequence, 264 residues long: Thymidylate synthase (264 aa).

Position 21 (R21) interacts with dUMP. H51 is a (6R)-5,10-methylene-5,6,7,8-tetrahydrofolate binding site. DUMP is bound at residue 126 to 127 (RR). The Nucleophile role is filled by C146. DUMP-binding positions include 166-169 (RSAD), N177, and 207-209 (HLY). Residue D169 participates in (6R)-5,10-methylene-5,6,7,8-tetrahydrofolate binding. A263 provides a ligand contact to (6R)-5,10-methylene-5,6,7,8-tetrahydrofolate.

This sequence belongs to the thymidylate synthase family. Bacterial-type ThyA subfamily. Homodimer.

The protein resides in the cytoplasm. It catalyses the reaction dUMP + (6R)-5,10-methylene-5,6,7,8-tetrahydrofolate = 7,8-dihydrofolate + dTMP. The protein operates within pyrimidine metabolism; dTTP biosynthesis. Catalyzes the reductive methylation of 2'-deoxyuridine-5'-monophosphate (dUMP) to 2'-deoxythymidine-5'-monophosphate (dTMP) while utilizing 5,10-methylenetetrahydrofolate (mTHF) as the methyl donor and reductant in the reaction, yielding dihydrofolate (DHF) as a by-product. This enzymatic reaction provides an intracellular de novo source of dTMP, an essential precursor for DNA biosynthesis. The chain is Thymidylate synthase from Hahella chejuensis (strain KCTC 2396).